A 318-amino-acid polypeptide reads, in one-letter code: Glutathione synthetase (318 aa).

Residues 125-311 (EKLFTAWFPE…ITGKLMDAIE (187 aa)) enclose the ATP-grasp domain. Residue 151–208 (FRQEHGDIILKPLDGMGGASIFRVKENDPNVSVIIETLTNHGQNYAMAQTFVPDISNG) participates in ATP binding. The Mg(2+) site is built by Glu-282 and Asn-284.

The protein belongs to the prokaryotic GSH synthase family. Mg(2+) serves as cofactor. Mn(2+) is required as a cofactor.

It catalyses the reaction gamma-L-glutamyl-L-cysteine + glycine + ATP = glutathione + ADP + phosphate + H(+). It functions in the pathway sulfur metabolism; glutathione biosynthesis; glutathione from L-cysteine and L-glutamate: step 2/2. In Vibrio vulnificus (strain YJ016), this protein is Glutathione synthetase.